A 2193-amino-acid polypeptide reads, in one-letter code: Non-reducing polyketide synthase esdpA (2193 aa).

Positions 90-252 (NVLLAPLTVL…AKVQVNGRYH (163 aa)) constitute a Starter acyltransferase (SAT) domain. The 417-residue stretch at 381-797 (DECVAIVGAA…GNNTVIIVCE (417 aa)) folds into the Ketosynthase family 3 (KS3) domain. Active-site for beta-ketoacyl synthase activity residues include cysteine 546, histidine 682, and histidine 720. One can recognise a Malonyl-CoA:ACP transacylase (MAT) domain in the interval 906–1158 (VFSGQSGMTV…YFVDAVRRIK (253 aa)). Serine 992 (for acyl/malonyl transferase activity) is an active-site residue. The N-terminal hotdog fold stretch occupies residues 1265-1392 (PPMLSLENFS…GRVVLEDRRR (128 aa)). The region spanning 1265–1569 (PPMLSLENFS…FVKISSHILQ (305 aa)) is the PKS/mFAS DH domain. The tract at residues 1419 to 1569 (VFSASGSIAY…FVKISSHILQ (151 aa)) is C-terminal hotdog fold. Aspartate 1479 functions as the Proton donor; for dehydratase activity in the catalytic mechanism. The Carrier domain occupies 1723 to 1799 (RILSDSMIKL…ELHDLMQSHP (77 aa)). Residue serine 1759 is modified to O-(pantetheine 4'-phosphoryl)serine. Residues 1944–2177 (YHGSEHKLLR…GFTHVDWSND (234 aa)) are methyltransferase (CMeT) domain.

It depends on pantetheine 4'-phosphate as a cofactor.

It functions in the pathway secondary metabolite biosynthesis; terpenoid biosynthesis. Non-reducing polyketide synthase; part of the cluster that mediates the biosynthesis of shearones, diterpenoid pyrones (DPs) which are structurally diverse meroterpenoids consisting of a diterpene linked by a pyrone, and which may exhibit a range of bioactivities. Whitin the pathway, esdpA takes part to the biosynthesis of the molecular scaffold via the production of the alpha-pyrone from one molecule of acetyl-CoA, two molecules of malonyl-CoA and one molecule of S-adenosyl-L-methionine (SAM). The molecular scaffold is commonly biosynthesized by a series of enzymes including the non-reducing polyketide synthase (NR-PKS) esdpA that generates an alpha-pyrone; the prenyltransferase esdpC that attaches a geranylgeranyl pyrophosphate (GGPP) produced by the GGPP synthase (GGPPS) esdpD onto the pyrone unit; the FAD-dependent monooxygenase esdpE that converts an olefin on the diterpene unit into an epoxide; and the terpene cyclase esdpB that catalyzes the cyclization reactions to give the molecular backbone shearone A. In the modification steps, esdpF oxidizes the hydroxy group to a ketone at C-3 and esdpG then attaches hydroxy groups at both C-11 and C-12. After that, esdpI hydroxylates at C-20 and esdpH hydroxylates at C-6'. The ether bridge is generated by nucleophilic attack of the hydroxy group at C-20 to the carbonyl carbon at C-3. EsdpH can also functions prior to esdpI. The different combinations of these modification enzymes lead to the production of diverse shearone derivatives, shearone I being the end product of the pathway. The alpha-ketoglutarate-dependent dioxygenase esdpJ seems not to be involved in this pathway. The sequence is that of Non-reducing polyketide synthase esdpA from Penicillium shearii (Eupenicillium shearii).